Reading from the N-terminus, the 286-residue chain is UDP-3-O-acyl-N-acetylglucosamine deacetylase (286 aa).

The Zn(2+) site is built by His-79, His-237, and Asp-241. The active-site Proton donor is His-264.

The protein belongs to the LpxC family. The cofactor is Zn(2+).

It carries out the reaction a UDP-3-O-[(3R)-3-hydroxyacyl]-N-acetyl-alpha-D-glucosamine + H2O = a UDP-3-O-[(3R)-3-hydroxyacyl]-alpha-D-glucosamine + acetate. It functions in the pathway glycolipid biosynthesis; lipid IV(A) biosynthesis; lipid IV(A) from (3R)-3-hydroxytetradecanoyl-[acyl-carrier-protein] and UDP-N-acetyl-alpha-D-glucosamine: step 2/6. Catalyzes the hydrolysis of UDP-3-O-myristoyl-N-acetylglucosamine to form UDP-3-O-myristoylglucosamine and acetate, the committed step in lipid A biosynthesis. The chain is UDP-3-O-acyl-N-acetylglucosamine deacetylase from Chlamydia trachomatis serovar A (strain ATCC VR-571B / DSM 19440 / HAR-13).